A 217-amino-acid chain; its full sequence is Non-structural protein NS3 (217 aa).

The protein belongs to the orbivirus NS3 family.

Its function is as follows. May play a role in the release of virions from infected cells. The polypeptide is Non-structural protein NS3 (Segment-10) (Camelus dromedarius (Dromedary)).